A 220-amino-acid chain; its full sequence is Fructose-6-phosphate aldolase 1 (220 aa).

Lys-85 functions as the Schiff-base intermediate with substrate in the catalytic mechanism.

It belongs to the transaldolase family. Type 3A subfamily. Homodecamer.

The protein localises to the cytoplasm. It catalyses the reaction beta-D-fructose 6-phosphate = dihydroxyacetone + D-glyceraldehyde 3-phosphate. In terms of biological role, catalyzes the reversible formation of fructose 6-phosphate from dihydroxyacetone and D-glyceraldehyde 3-phosphate via an aldolization reaction. This chain is Fructose-6-phosphate aldolase 1 (fsaA), found in Escherichia coli O157:H7.